Reading from the N-terminus, the 218-residue chain is Octanoyltransferase (218 aa).

In terms of domain architecture, BPL/LPL catalytic spans 30–212; the sequence is ENTADEIWLV…HFYNILGYNA (183 aa). Substrate is bound by residues 69–76, 141–143, and 154–156; these read RGGQITYH, SLG, and GLA. Cysteine 172 serves as the catalytic Acyl-thioester intermediate.

The protein belongs to the LipB family.

The protein resides in the cytoplasm. It catalyses the reaction octanoyl-[ACP] + L-lysyl-[protein] = N(6)-octanoyl-L-lysyl-[protein] + holo-[ACP] + H(+). It participates in protein modification; protein lipoylation via endogenous pathway; protein N(6)-(lipoyl)lysine from octanoyl-[acyl-carrier-protein]: step 1/2. Its function is as follows. Catalyzes the transfer of endogenously produced octanoic acid from octanoyl-acyl-carrier-protein onto the lipoyl domains of lipoate-dependent enzymes. Lipoyl-ACP can also act as a substrate although octanoyl-ACP is likely to be the physiological substrate. This Actinobacillus pleuropneumoniae serotype 5b (strain L20) protein is Octanoyltransferase.